Here is a 225-residue protein sequence, read N- to C-terminus: Flagellar transcriptional regulator FlhC (225 aa).

Residues C149, C152, C169, and C172 each contribute to the Zn(2+) site.

It belongs to the FlhC family. Heterohexamer composed of two FlhC and four FlhD subunits. Each FlhC binds a FlhD dimer, forming a heterotrimer, and a hexamer assembles by dimerization of two heterotrimers. Zn(2+) is required as a cofactor.

It localises to the cytoplasm. Its function is as follows. Functions in complex with FlhD as a master transcriptional regulator that regulates transcription of several flagellar and non-flagellar operons by binding to their promoter region. Activates expression of class 2 flagellar genes, including fliA, which is a flagellum-specific sigma factor that turns on the class 3 genes. Also regulates genes whose products function in a variety of physiological pathways. The protein is Flagellar transcriptional regulator FlhC of Burkholderia lata (strain ATCC 17760 / DSM 23089 / LMG 22485 / NCIMB 9086 / R18194 / 383).